A 110-amino-acid polypeptide reads, in one-letter code: Protein OPG154 (110 aa).

The protein belongs to the orthopoxvirus OPG154 protein family. As to quaternary structure, homohexamers, covalently linked. Interacts with OPG144 and OPG153.

The protein localises to the virion. In terms of biological role, structural protein involved in the envelopment of mature virion (MV) to form the wrapped virion (WV). The wrapping consists of the addition of Golgi membranes to the mature virion. Participates in mature virion (MV) movement within the infected cell. May play an indirect role in MV-cell fusion. In Homo sapiens (Human), this protein is Protein OPG154 (OPG154).